A 207-amino-acid polypeptide reads, in one-letter code: Cytochrome c biogenesis ATP-binding export protein CcmA (207 aa).

Residues 4 to 207 (LEARELLCER…RISLTQTGAA (204 aa)) enclose the ABC transporter domain. 36-43 (GSNGAGKT) is a binding site for ATP.

It belongs to the ABC transporter superfamily. CcmA exporter (TC 3.A.1.107) family. As to quaternary structure, the complex is composed of two ATP-binding proteins (CcmA) and two transmembrane proteins (CcmB).

The protein resides in the cell inner membrane. It catalyses the reaction heme b(in) + ATP + H2O = heme b(out) + ADP + phosphate + H(+). Its function is as follows. Part of the ABC transporter complex CcmAB involved in the biogenesis of c-type cytochromes; once thought to export heme, this seems not to be the case, but its exact role is uncertain. Responsible for energy coupling to the transport system. In Escherichia coli O6:H1 (strain CFT073 / ATCC 700928 / UPEC), this protein is Cytochrome c biogenesis ATP-binding export protein CcmA.